The primary structure comprises 325 residues: MEISDIIYGQHHIDGVLEELIKSAPVQRLKGIYQGGASFLVNRKWNVTRYEHSIGVMLLIKKLGGTIEEQIAGLLHDVSHTAFSHVVDVVFENQAEDYHENIFQQVIVHSEIPDILQKHGYHTEELLSDDSRWTLLEQPAPELCADRTDYTLRDMYRYGHINLHEAQTFLDHLIVRNGRMFPDSIEAAEWFVSVYYKEVIDFFLNPVNVYGYEYLARALKAALRHDVISAEDLLKTDQEVLNILRASKNEEVLSLLTSIHPGIQVIEDDIQYDFHQKKKMRLIDPSIFLDDKWIKSSGVSEKVRKMGEAAYQKAKKGVYIKILKQ.

An HD domain is found at 49–151 (RYEHSIGVML…ELCADRTDYT (103 aa)).

This is an uncharacterized protein from Bacillus subtilis (strain 168).